A 263-amino-acid chain; its full sequence is 3-methyl-2-oxobutanoate hydroxymethyltransferase (263 aa).

Asp45 and Asp84 together coordinate Mg(2+). 3-methyl-2-oxobutanoate is bound by residues 45–46 (DS), Asp84, and Lys113. Glu115 is a Mg(2+) binding site. Glu182 acts as the Proton acceptor in catalysis.

It belongs to the PanB family. Homodecamer; pentamer of dimers. Requires Mg(2+) as cofactor.

The protein localises to the cytoplasm. The enzyme catalyses 3-methyl-2-oxobutanoate + (6R)-5,10-methylene-5,6,7,8-tetrahydrofolate + H2O = 2-dehydropantoate + (6S)-5,6,7,8-tetrahydrofolate. Its pathway is cofactor biosynthesis; coenzyme A biosynthesis. Its function is as follows. Catalyzes the reversible reaction in which hydroxymethyl group from 5,10-methylenetetrahydrofolate is transferred onto alpha-ketoisovalerate to form ketopantoate. This Ignicoccus hospitalis (strain KIN4/I / DSM 18386 / JCM 14125) protein is 3-methyl-2-oxobutanoate hydroxymethyltransferase.